The chain runs to 121 residues: Spermidine export protein MdtJ (121 aa).

Helical transmembrane passes span 1–21, 32–52, 55–75, and 82–102; these read MYIYWILLGLAIATEITGTLS, GGFILMLVMISLSYIFLSFAV, IALGVAYALWEGIGILFITLF, and ESLSLMKIAGLTTLVAGIVLI.

It belongs to the drug/metabolite transporter (DMT) superfamily. Small multidrug resistance (SMR) (TC 2.A.7.1) family. MdtJ subfamily. In terms of assembly, forms a complex with MdtI.

The protein resides in the cell inner membrane. Catalyzes the excretion of spermidine. This Escherichia coli O139:H28 (strain E24377A / ETEC) protein is Spermidine export protein MdtJ.